Here is a 622-residue protein sequence, read N- to C-terminus: MDEFVKGLMKNGYLITPSAYYLLVGHFNEGKFSLIELIKFAKSRETFIIDDEIANEFLKSIGAEVELPQEIKEGYISTGEGSQKVPDHEELEKITNESSVESSISTGETPKTEELQPTLDILEEEIGDIEGGESSISTGDEVPEVENNNGGTVVVFDKYGYPFTYVPEEIEEELEEYPKYEDVTIEINPNLEVVPIEKDYEIKFDVRRVKLKPPKVKSGSGKEGEIIVEAYASLFRSRLRKLRRILRENPEVSNVIDIKKLKYVKGDEEVTIIGLVNSKKETSKGLIFEVEDQTDRVKVFLPKDSEDYREALKVLPDAVVAFKGVYSKRGIFFANRFYLPDVPLYRKQKPPLEEKVYAVLTSDIHVGSKEFCEKAFIKFLEWLNGYVESKEEEEIVSRIRYLIIAGDVVDGIGIYPGQYSDLIIPDIFDQYEALANLLSNVPKHITIFIGPGNHDAARPAIPQPEFYEEYAKPLYKLKNTVIISNPAVIRLHGRDFLIAHGRGIEDVVSFVPGLTHHKPGLPMVELLKMRHLAPTFGGKVPIAPDPEDLLVIEEVPDLVQMGHVHVYDTAVYRGVQLVNSATWQAQTEFQKMVNIVPTPGLVPIVDVESARVIKVLDFSRWC.

A disordered region spans residues Ile76–Glu113. The span at Val85 to Thr95 shows a compositional bias: basic and acidic residues. Positions Asn96–Thr109 are enriched in polar residues.

It belongs to the DNA polymerase delta/II small subunit family. Heterodimer of a large subunit and a small subunit.

The catalysed reaction is DNA(n) + a 2'-deoxyribonucleoside 5'-triphosphate = DNA(n+1) + diphosphate. The enzyme catalyses Exonucleolytic cleavage in the 3'- to 5'-direction to yield nucleoside 5'-phosphates.. Functionally, possesses two activities: a DNA synthesis (polymerase) and an exonucleolytic activity that degrades single-stranded DNA in the 3' to 5' direction. Has a template-primer preference which is characteristic of a replicative DNA polymerase. The protein is DNA polymerase II small subunit (polB) of Pyrococcus horikoshii (strain ATCC 700860 / DSM 12428 / JCM 9974 / NBRC 100139 / OT-3).